Here is a 71-residue protein sequence, read N- to C-terminus: DNA-directed RNA polymerase subunit epsilon (71 aa).

This sequence belongs to the RNA polymerase subunit epsilon family. In terms of assembly, RNAP is composed of a core of 2 alpha, a beta and a beta' subunit. The core is associated with a delta subunit, and at least one of epsilon or omega. When a sigma factor is associated with the core the holoenzyme is formed, which can initiate transcription.

The enzyme catalyses RNA(n) + a ribonucleoside 5'-triphosphate = RNA(n+1) + diphosphate. In terms of biological role, a non-essential component of RNA polymerase (RNAP). The chain is DNA-directed RNA polymerase subunit epsilon from Staphylococcus saprophyticus subsp. saprophyticus (strain ATCC 15305 / DSM 20229 / NCIMB 8711 / NCTC 7292 / S-41).